The sequence spans 426 residues: UDP-N-acetylglucosamine 1-carboxyvinyltransferase (426 aa).

Phosphoenolpyruvate is bound at residue 22–23 (KN). Residue arginine 99 coordinates UDP-N-acetyl-alpha-D-glucosamine. Cysteine 123 serves as the catalytic Proton donor. Cysteine 123 bears the 2-(S-cysteinyl)pyruvic acid O-phosphothioketal mark. UDP-N-acetyl-alpha-D-glucosamine-binding positions include 128–132 (RPIDL), aspartate 313, and isoleucine 335.

The protein belongs to the EPSP synthase family. MurA subfamily.

It is found in the cytoplasm. The catalysed reaction is phosphoenolpyruvate + UDP-N-acetyl-alpha-D-glucosamine = UDP-N-acetyl-3-O-(1-carboxyvinyl)-alpha-D-glucosamine + phosphate. The protein operates within cell wall biogenesis; peptidoglycan biosynthesis. Functionally, cell wall formation. Adds enolpyruvyl to UDP-N-acetylglucosamine. The polypeptide is UDP-N-acetylglucosamine 1-carboxyvinyltransferase (Zymomonas mobilis subsp. mobilis (strain ATCC 31821 / ZM4 / CP4)).